Reading from the N-terminus, the 149-residue chain is Myoglobin (149 aa).

Thr-2 is subject to N-acetylthreonine. Residues 2–143 (TEWEHVNKVW…ICSDLETLYK (142 aa)) enclose the Globin domain. Residue His-60 coordinates nitrite. His-60 serves as a coordination point for O2. Heme b is bound at residue His-89.

Belongs to the globin family. Monomeric.

Its subcellular location is the cytoplasm. The protein resides in the sarcoplasm. The catalysed reaction is Fe(III)-heme b-[protein] + nitric oxide + H2O = Fe(II)-heme b-[protein] + nitrite + 2 H(+). The enzyme catalyses H2O2 + AH2 = A + 2 H2O. Functionally, monomeric heme protein which primary function is to store oxygen and facilitate its diffusion within muscle tissues. Reversibly binds oxygen through a pentacoordinated heme iron and enables its timely and efficient release as needed during periods of heightened demand. Depending on the oxidative conditions of tissues and cells, and in addition to its ability to bind oxygen, it also has a nitrite reductase activity whereby it regulates the production of bioactive nitric oxide. Under stress conditions, like hypoxia and anoxia, it also protects cells against reactive oxygen species thanks to its pseudoperoxidase activity. The protein is Myoglobin (mb) of Heterodontus portusjacksoni (Port Jackson shark).